The primary structure comprises 412 residues: Cinnamoyl-CoA:phenyllactate CoA-transferase (412 aa).

N102 lines the CoA pocket. The active-site Nucleophile is D176.

Homodimer. Part of the heterotrimeric phenyllactate dehydratase complex FldABC, composed of (R)-phenyllactate CoA-transferase (FldA) and a heterodimeric (R)-phenyllactyl-CoA dehydratase (FldB and FldC).

The enzyme catalyses (E)-cinnamoyl-CoA + (R)-3-phenyllactate = (R)-3-phenyllactoyl-CoA + (E)-cinnamate. It functions in the pathway amino-acid degradation; L-phenylalanine degradation. Component of the phenyllactate dehydratase complex FldABC that is involved in the fermentation of L-phenylalanine via a Stickland reaction. This complex catalyzes the reversible syn-dehydration of (R)-phenyllactate to (E)-cinnamate in two steps, a CoA-transfer from cinnamoyl-CoA to phenyllactate, catalyzed by FldA, followed by the dehydration of phenyllactyl-CoA to cinnamoyl-CoA, catalyzed by FldB and FldC. In vitro, FldA can use 3-phenylpropanoate as a better CoA-acceptor than phenyllactate. The polypeptide is Cinnamoyl-CoA:phenyllactate CoA-transferase (Clostridium sporogenes).